Reading from the N-terminus, the 418-residue chain is D-amino acid dehydrogenase (418 aa).

FAD is bound at residue 3-17 (VLVLGAGVAGVSSAW).

It belongs to the DadA oxidoreductase family. The cofactor is FAD.

It carries out the reaction a D-alpha-amino acid + A + H2O = a 2-oxocarboxylate + AH2 + NH4(+). It participates in amino-acid degradation; D-alanine degradation; NH(3) and pyruvate from D-alanine: step 1/1. Functionally, oxidative deamination of D-amino acids. This chain is D-amino acid dehydrogenase, found in Neisseria meningitidis serogroup C / serotype 2a (strain ATCC 700532 / DSM 15464 / FAM18).